A 485-amino-acid polypeptide reads, in one-letter code: Benzaldehyde dehydrogenase YfmT (485 aa).

231-236 (GSTKVG) lines the NAD(+) pocket. Active-site residues include glutamate 253 and cysteine 287.

Belongs to the aldehyde dehydrogenase family.

The catalysed reaction is benzaldehyde + NAD(+) + H2O = benzoate + NADH + 2 H(+). It carries out the reaction vanillin + NAD(+) + H2O = vanillate + NADH + 2 H(+). Its function is as follows. A benzaldehyde dehydrogenase able to act on substrates with 3- and 4-hydroxy and methoxy substitutions; converts vanillin (4-hydroxy-3-methoxybenzaldehyde) to vanillic acid in vitro. The physiological substrate is unknown. The protein is Benzaldehyde dehydrogenase YfmT (yfmT) of Bacillus subtilis (strain 168).